Consider the following 455-residue polypeptide: Glutamate-1-semialdehyde 2,1-aminomutase (455 aa).

Lysine 286 is subject to N6-(pyridoxal phosphate)lysine.

This sequence belongs to the class-III pyridoxal-phosphate-dependent aminotransferase family. HemL subfamily. Homodimer. The cofactor is pyridoxal 5'-phosphate.

The protein localises to the cytoplasm. It catalyses the reaction (S)-4-amino-5-oxopentanoate = 5-aminolevulinate. It functions in the pathway porphyrin-containing compound metabolism; protoporphyrin-IX biosynthesis; 5-aminolevulinate from L-glutamyl-tRNA(Glu): step 2/2. This Clavibacter michiganensis subsp. michiganensis (strain NCPPB 382) protein is Glutamate-1-semialdehyde 2,1-aminomutase.